Here is a 293-residue protein sequence, read N- to C-terminus: Non-homologous end joining protein Ku (293 aa).

Residues 10–195 (ISFGLVHIPV…KLDKRELEMA (186 aa)) enclose the Ku domain. Positions 216-229 (SDKIMKLVEEKAAK) are required for dimerization. Residues 260 to 293 (RSRAGGGKDKGSEKAGADAKGRAKSGASRSRRKA) form a disordered region. Positions 265-280 (GGKDKGSEKAGADAKG) are enriched in basic and acidic residues.

Belongs to the prokaryotic Ku family. As to quaternary structure, homodimer, may form higher-order multimers on DNA. Non-dimerized protein does not stimulate LigD ligase activity. Probably interacts with LigD.

Its function is as follows. With LigD forms a non-homologous end joining (NHEJ) DNA repair enzyme, which repairs dsDNA breaks with reduced fidelity. Stimulates rNTP addition to DSB and end joining (ligation) of linear DNA by LigD, on 3'-overhangs and probably also 5'-overhangs and blunt dsDNA breaks. Binds both ends of linear dsDNA protecting it from exonuclease activity. The polypeptide is Non-homologous end joining protein Ku (Pseudomonas aeruginosa (strain ATCC 15692 / DSM 22644 / CIP 104116 / JCM 14847 / LMG 12228 / 1C / PRS 101 / PAO1)).